Reading from the N-terminus, the 384-residue chain is CDP-diacylglycerol--serine O-phosphatidyltransferase (384 aa).

It belongs to the CDP-alcohol phosphatidyltransferase class-I family.

Its subcellular location is the membrane. It carries out the reaction a CDP-1,2-diacyl-sn-glycerol + L-serine = a 1,2-diacyl-sn-glycero-3-phospho-L-serine + CMP + H(+). The protein operates within phospholipid metabolism; phosphatidylethanolamine biosynthesis; phosphatidylethanolamine from CDP-diacylglycerol: step 1/2. The polypeptide is CDP-diacylglycerol--serine O-phosphatidyltransferase (PSS) (Encephalitozoon cuniculi (strain GB-M1) (Microsporidian parasite)).